A 178-amino-acid chain; its full sequence is MQDVQRTVEVSVGPIVGLDYTLLYDTLPETVSDNITLPDLKDPERVTEDTKKLILKGCVYIAYHHPLETDTLFIKVHKHITEFCHSFLSHLLGGEDDDNALIDIGLFFNMLQPSLGGWITKNFLRHPNRMSKDQIKLLLDQIIKMAKAESSDTEEYEKVWKKMPTYFESIIQPLLHKT.

It belongs to the tenuiviruses NCP family.

It localises to the host cytoplasm. In terms of biological role, induces the formation of large intracellular inclusion body, organized in amorphous and crystalline arrays. Presumably the main cause of the stripe disease observed in host. The protein is Major non-capsid protein of Avena sativa (Oat).